A 188-amino-acid polypeptide reads, in one-letter code: Probable nicotinate-nucleotide adenylyltransferase (188 aa).

This sequence belongs to the NadD family.

It carries out the reaction nicotinate beta-D-ribonucleotide + ATP + H(+) = deamido-NAD(+) + diphosphate. Its pathway is cofactor biosynthesis; NAD(+) biosynthesis; deamido-NAD(+) from nicotinate D-ribonucleotide: step 1/1. Its function is as follows. Catalyzes the reversible adenylation of nicotinate mononucleotide (NaMN) to nicotinic acid adenine dinucleotide (NaAD). This is Probable nicotinate-nucleotide adenylyltransferase from Listeria monocytogenes serotype 4b (strain F2365).